A 200-amino-acid polypeptide reads, in one-letter code: Protein GrpE (200 aa).

Residues 1–11 (MTDNDGQKDFS) show a composition bias toward basic and acidic residues. Residues 1-43 (MTDNDGQKDFSEAAAENAGSKPGEPRVSKPYIMPDDPEETPSE) form a disordered region.

This sequence belongs to the GrpE family. Homodimer.

Its subcellular location is the cytoplasm. In terms of biological role, participates actively in the response to hyperosmotic and heat shock by preventing the aggregation of stress-denatured proteins, in association with DnaK and GrpE. It is the nucleotide exchange factor for DnaK and may function as a thermosensor. Unfolded proteins bind initially to DnaJ; upon interaction with the DnaJ-bound protein, DnaK hydrolyzes its bound ATP, resulting in the formation of a stable complex. GrpE releases ADP from DnaK; ATP binding to DnaK triggers the release of the substrate protein, thus completing the reaction cycle. Several rounds of ATP-dependent interactions between DnaJ, DnaK and GrpE are required for fully efficient folding. The polypeptide is Protein GrpE (Afipia carboxidovorans (strain ATCC 49405 / DSM 1227 / KCTC 32145 / OM5) (Oligotropha carboxidovorans)).